We begin with the raw amino-acid sequence, 194 residues long: 7-methyl-GTP pyrophosphatase (194 aa).

Catalysis depends on Asp69, which acts as the Proton acceptor.

This sequence belongs to the Maf family. YceF subfamily. Requires a divalent metal cation as cofactor.

It is found in the cytoplasm. It catalyses the reaction N(7)-methyl-GTP + H2O = N(7)-methyl-GMP + diphosphate + H(+). Its function is as follows. Nucleoside triphosphate pyrophosphatase that hydrolyzes 7-methyl-GTP (m(7)GTP). May have a dual role in cell division arrest and in preventing the incorporation of modified nucleotides into cellular nucleic acids. This chain is 7-methyl-GTP pyrophosphatase (yceF), found in Shigella flexneri.